Consider the following 164-residue polypeptide: Small ribosomal subunit protein uS5 (164 aa).

Residues 10 to 73 (LEERVVAINR…EAAKKNMIEV (64 aa)) enclose the S5 DRBM domain.

This sequence belongs to the universal ribosomal protein uS5 family. As to quaternary structure, part of the 30S ribosomal subunit. Contacts proteins S4 and S8.

With S4 and S12 plays an important role in translational accuracy. In terms of biological role, located at the back of the 30S subunit body where it stabilizes the conformation of the head with respect to the body. This chain is Small ribosomal subunit protein uS5, found in Streptococcus pyogenes serotype M1.